Here is a 119-residue protein sequence, read N- to C-terminus: Toxin ICK-11 (119 aa).

The N-terminal stretch at 1–19 is a signal peptide; it reads MMKLYSLVIIATLAAAAFA. Intrachain disulfides connect Cys-59–Cys-74, Cys-67–Cys-80, Cys-71–Cys-116, and Cys-73–Cys-87.

It belongs to the neurotoxin 25 family. ICK-8 subfamily. As to expression, expressed by the venom gland.

It localises to the secreted. In terms of biological role, ion channel inhibitor. The sequence is that of Toxin ICK-11 from Trittame loki (Brush-footed trapdoor spider).